The chain runs to 334 residues: Protein-methionine-sulfoxide reductase catalytic subunit MsrP (334 aa).

The tat-type signal signal peptide spans 1 to 44 (MKKIRPLTEADVTAESAFFMQRRQVLKALGISAAALSLPSTAQA). Mo-molybdopterin is bound by residues Asn88, 91–92 (YE), Cys146, Thr181, Asn233, Arg238, and 249–251 (GIK).

This sequence belongs to the MsrP family. In terms of assembly, heterodimer of a catalytic subunit (MsrP) and a heme-binding subunit (MsrQ). Requires Mo-molybdopterin as cofactor. Predicted to be exported by the Tat system. The position of the signal peptide cleavage has not been experimentally proven.

It localises to the periplasm. It carries out the reaction L-methionyl-[protein] + a quinone + H2O = L-methionyl-(S)-S-oxide-[protein] + a quinol. The enzyme catalyses L-methionyl-[protein] + a quinone + H2O = L-methionyl-(R)-S-oxide-[protein] + a quinol. Part of the MsrPQ system that repairs oxidized periplasmic proteins containing methionine sulfoxide residues (Met-O), using respiratory chain electrons. Thus protects these proteins from oxidative-stress damage caused by reactive species of oxygen and chlorine generated by the host defense mechanisms. MsrPQ is essential for the maintenance of envelope integrity under bleach stress, rescuing a wide series of structurally unrelated periplasmic proteins from methionine oxidation, including the primary periplasmic chaperone SurA and the lipoprotein Pal. The catalytic subunit MsrP is non-stereospecific, being able to reduce both (R-) and (S-) diastereoisomers of methionine sulfoxide. This chain is Protein-methionine-sulfoxide reductase catalytic subunit MsrP, found in Salmonella agona (strain SL483).